Reading from the N-terminus, the 445-residue chain is CBL-interacting serine/threonine-protein kinase 8 (445 aa).

Positions Tyr-9–Phe-262 constitute a Protein kinase domain. ATP contacts are provided by residues Ile-15–Val-23 and Lys-38. The active-site Proton acceptor is the Asp-132. Residues Asp-150–Glu-177 form an activation loop region. Phosphoserine is present on Ser-154. Thr-166 carries the post-translational modification Phosphothreonine. The NAF domain maps to Thr-302–Asp-326. The segment at Lys-333 to Thr-362 is PPI.

It belongs to the protein kinase superfamily. CAMK Ser/Thr protein kinase family. SNF1 subfamily. As to quaternary structure, interacts with CBL1 and CBL9. It depends on Mn(2+) as a cofactor. As to expression, mostly expressed in roots, and, to a lower extent, in leaves, stems, flowers, and siliques.

It catalyses the reaction L-seryl-[protein] + ATP = O-phospho-L-seryl-[protein] + ADP + H(+). The enzyme catalyses L-threonyl-[protein] + ATP = O-phospho-L-threonyl-[protein] + ADP + H(+). In terms of biological role, CIPK serine-threonine protein kinases interact with CBL proteins. Binding of a CBL protein to the regulatory NAF domain of CIPK protein lead to the activation of the kinase in a calcium-dependent manner. The sequence is that of CBL-interacting serine/threonine-protein kinase 8 (CIPK8) from Arabidopsis thaliana (Mouse-ear cress).